The primary structure comprises 254 residues: ATP-dependent L-serine kinase SbnI (254 aa).

Glutamate 20 is a catalytic residue. Residue serine 33 participates in ADP binding. An O-phospho-L-serine-binding site is contributed by isoleucine 57. Residues aspartate 58, glycine 59, histidine 61, and arginine 62 each coordinate ADP. O-phospho-L-serine-binding residues include glycine 59 and histidine 61. O-phospho-L-serine contacts are provided by tryptophan 98 and arginine 229.

Forms dimers and tetramers in solution. Predominantly forms dimers. Dimerization/oligomerization is not essential for kinase activity.

The catalysed reaction is L-serine + ATP = O-phospho-L-serine + ADP + H(+). It functions in the pathway siderophore biosynthesis. Its activity is regulated as follows. Binds heme and heme binding inhibits DNA binding. In terms of biological role, free serine kinase that uses ATP to phosphorylate L-serine to yield O-phospho-L-serine and ADP. O-phospho-L-serine serves as a substrate for SbnA and is a precursor for staphyloferrin B biosynthesis. Is also a DNA-binding regulatory protein that senses heme to control gene expression for siderophore biosynthesis. Binds to DNA within the sbnC coding region and is required for expression of genes in the sbn operon from sbnD onward. This chain is ATP-dependent L-serine kinase SbnI, found in Staphylococcus aureus (strain NCTC 8325 / PS 47).